The chain runs to 262 residues: MDKRWSLQGMTALVTGGASGIGHAIVEELAGLGARIYVCDISETLLNQSLSEWEKKGFQVSGSICDVSSHSERETLMQTVSKMFDGKLNILVNNVGVVNPKPTIEYVAADFSFSISTNLESAYHLSQLSHPLLKASEFGSIIFISSVGGVVSMECGSIYSLTKGALNQLAKTLACEWARDGIRANSVAPNFIYTAMAQPFFKDADYEKSLVSRTPLGRAGEPNEVSSLVAFLCLPAASYITGQTICVDGGLTVNGFSYKPQA.

NADP(+) is bound at residue 13-37 (LVTGGASGIGHAIVEELAGLGARIY). Ser146 is a substrate binding site. Catalysis depends on Tyr159, which acts as the Proton acceptor.

The protein belongs to the short-chain dehydrogenases/reductases (SDR) family. SDR65C subfamily.

The chain is Tropinone reductase homolog At2g30670 from Arabidopsis thaliana (Mouse-ear cress).